The chain runs to 165 residues: GPI-anchored protein LORELEI (165 aa).

The first 20 residues, Met1–Ser20, serve as a signal peptide directing secretion. Residues Pro82–Asp93 are required for its function in pollen tube reception. Asn137 is a glycosylation site (N-linked (GlcNAc...) asparagine). A lipid anchor (GPI-anchor amidated serine) is attached at Ser139. The propeptide at Thr140–Thr165 is removed in mature form.

As to quaternary structure, interacts with FER. Expressed in leaves, buds, flowers and stems. Highest expression in the synergid cells of the female gametophyte.

The protein localises to the cell membrane. Functionally, female gametophyte-specific component of the signaling pathway required for fertilization. Required for reception of the pollen tube by the female gametophyte. Acts specifically at the synergid cell surface for pollen tube reception. Plays a role in double fertilization and early seed development. Component of the FER-regulated Rho GTPase signaling complex. Acts as a chaperone and coreceptor for FER. Required for localization of FER to the plasma membrane. The protein is GPI-anchored protein LORELEI (LRE) of Arabidopsis thaliana (Mouse-ear cress).